Reading from the N-terminus, the 608-residue chain is Nuclear protein localization protein 4 homolog (608 aa).

Residue A2 is modified to N-acetylalanine. K179 is modified (N6-acetyllysine). The MPN domain occupies 226 to 363 (IMFENHTVAD…MCRLSPDGHF (138 aa)). The RanBP2-type zinc-finger motif lies at 580–608 (TAAMWACQHCTFMNQPGTGHCEMCSLPRT).

This sequence belongs to the NPL4 family. As to quaternary structure, heterodimer with UFD1. The heterodimer binds ubiquitinated proteins. The heterodimer binds to VCP and inhibits Golgi membrane fusion. Interacts with ZFAND2B; probably through VCP. Expressed at highest levels in brain, heart, skeletal muscle, kidney and fetal liver.

It is found in the cytoplasm. It localises to the cytosol. The protein resides in the endoplasmic reticulum. Its subcellular location is the nucleus. The protein operates within protein degradation; proteasomal ubiquitin-dependent pathway. Functionally, the ternary complex containing UFD1, VCP and NPLOC4 binds ubiquitinated proteins and is necessary for the export of misfolded proteins from the ER to the cytoplasm, where they are degraded by the proteasome. The NPLOC4-UFD1-VCP complex regulates spindle disassembly at the end of mitosis and is necessary for the formation of a closed nuclear envelope. Acts as a negative regulator of type I interferon production via the complex formed with VCP and UFD1, which binds to RIGI and recruits RNF125 to promote ubiquitination and degradation of RIGI. The polypeptide is Nuclear protein localization protein 4 homolog (NPLOC4) (Homo sapiens (Human)).